The primary structure comprises 343 residues: tRNA N6-adenosine threonylcarbamoyltransferase (343 aa).

Residues H111 and H115 each contribute to the Fe cation site. Substrate is bound by residues 134–138 (LVSGG), D167, G180, and N276. D304 serves as a coordination point for Fe cation.

This sequence belongs to the KAE1 / TsaD family. Requires Fe(2+) as cofactor.

It is found in the cytoplasm. It carries out the reaction L-threonylcarbamoyladenylate + adenosine(37) in tRNA = N(6)-L-threonylcarbamoyladenosine(37) in tRNA + AMP + H(+). Functionally, required for the formation of a threonylcarbamoyl group on adenosine at position 37 (t(6)A37) in tRNAs that read codons beginning with adenine. Is involved in the transfer of the threonylcarbamoyl moiety of threonylcarbamoyl-AMP (TC-AMP) to the N6 group of A37, together with TsaE and TsaB. TsaD likely plays a direct catalytic role in this reaction. The protein is tRNA N6-adenosine threonylcarbamoyltransferase of Chromohalobacter salexigens (strain ATCC BAA-138 / DSM 3043 / CIP 106854 / NCIMB 13768 / 1H11).